The primary structure comprises 964 residues: Protein translocase subunit SecA (964 aa).

ATP contacts are provided by residues Gln86, 104–108, and Asp494; that span reads GEGKT. Residues 846-964 are disordered; the sequence is ETAESADTIA…YKMCHGQNEA (119 aa). The segment covering 871 to 882 has biased composition (acidic residues); it reads AEGEVEEEDEDT. The segment covering 887 to 900 has biased composition (low complexity); the sequence is AIAESAAASEAGES. Zn(2+) contacts are provided by Cys947, Cys949, Cys958, and His959.

The protein belongs to the SecA family. Monomer and homodimer. Part of the essential Sec protein translocation apparatus which comprises SecA, SecYEG and auxiliary proteins SecDF. Other proteins may also be involved. It depends on Zn(2+) as a cofactor.

It is found in the cell membrane. The protein localises to the cytoplasm. The enzyme catalyses ATP + H2O + cellular proteinSide 1 = ADP + phosphate + cellular proteinSide 2.. Functionally, part of the Sec protein translocase complex. Interacts with the SecYEG preprotein conducting channel. Has a central role in coupling the hydrolysis of ATP to the transfer of proteins into and across the cell membrane, serving as an ATP-driven molecular motor driving the stepwise translocation of polypeptide chains across the membrane. The polypeptide is Protein translocase subunit SecA (Bifidobacterium longum subsp. infantis (strain ATCC 15697 / DSM 20088 / JCM 1222 / NCTC 11817 / S12)).